The chain runs to 270 residues: Probable inner membrane protein BTH_II0599 (270 aa).

Transmembrane regions (helical) follow at residues 24 to 44 (RNPLAFVTLFFTYLLAMMLVS), 45 to 65 (LVPVIGAALPLLLIPGIAVGF), 98 to 118 (LLTLGGLYIVSMAAVFACSAL), 150 to 170 (ALIAAALYAPVAMMFWFAPVL), 198 to 218 (VYGLLWFALALGVSFGLAALM), and 226 to 246 (YALMVMMPASIVITAMLYCSF).

It is found in the cell inner membrane. Its function is as follows. (Microbial infection) Probably transports the toxic C-terminal region of CdiA-2 from B.pseudomallei strain 1026b across the inner membrane to the cytoplasm, where CdiA has a toxic effect. Expression in E.coli makes the bacteria sensitive to the tRNase domain of B.pseudomallei strain 1026b CdiA-2. In Burkholderia thailandensis (strain ATCC 700388 / DSM 13276 / CCUG 48851 / CIP 106301 / E264), this protein is Probable inner membrane protein BTH_II0599.